The primary structure comprises 6885 residues: Nesprin-2 (6885 aa).

Residues M1–K286 are actin-binding. Topologically, residues M1–R6834 are cytoplasmic. 2 consecutive Calponin-homology (CH) domains span residues D31–H136 and M181–K286. 7 Spectrin repeats span residues G297 to N378, A379 to N472, I473 to Y575, N576 to Q680, V735 to T838, D839 to E932, and L933 to S1034. A coiled-coil region spans residues G297–E6782. The residue at position 841 (S841) is a Phosphoserine. K955 carries the post-translational modification N6-acetyllysine. Polar residues predominate over residues P1042 to N1059. Residues P1042–E1084 are disordered. 12 Spectrin repeats span residues T1121 to T1212, N1263 to K1323, A1324 to Q1419, E1420 to T1524, E1525 to D1636, Y1637 to S1738, N1739 to S1830, V1831 to L1938, E1939 to D2036, K2037 to T2132, Y2133 to N2243, and L2244 to I2360. Positions E2368 to A2382 are enriched in basic and acidic residues. Positions E2368–A2394 are disordered. Over residues T2383–S2393 the composition is skewed to polar residues. 16 Spectrin repeats span residues D2432–K2513, N2514–Q2620, Q2621–E2717, P2718–F2831, K2832–N2933, T2934–K3036, Q3037–L3142, E3143–T3248, N3249–T3352, E3353–E3465, E3466–K3573, N3574–V3679, L3680–T3777, S3778–E3880, S3881–E3986, and Q3987–V4086. S2781 is subject to Phosphoserine. 2 stretches are compositionally biased toward basic and acidic residues: residues Q4073–L4083 and V4093–K4102. Disordered stretches follow at residues Q4073–I4162, D4184–P4232, E4335–L4363, and H4416–N4448. S4108 is subject to Phosphoserine. Basic and acidic residues-rich tracts occupy residues S4122–E4134 and W4144–A4155. The Spectrin 36 repeat unit spans residues K4229–K4348. Positions E4335–E4356 are enriched in basic and acidic residues. Positions T4421–E4434 are enriched in polar residues. 17 Spectrin repeats span residues N4520 to Q4639, N4640 to Y4727, T4728 to L4837, Q4838 to L4943, K4944 to L5051, H5052 to H5164, L5165 to N5266, Q5267 to S5391, N5392 to V5487, K5488 to L5589, Q5590 to D5704, F5705 to A5799, E5800 to I5907, R5908 to L6017, K6018 to W6135, R6136 to F6243, and T6244 to E6355. Residue S5785 is modified to Phosphoserine. Over residues L6354–M6367 the composition is skewed to acidic residues. Positions L6354–R6508 are disordered. 7 positions are modified to phosphoserine: S6361, S6384, S6411, S6428, S6429, S6430, and S6459. Residues E6368–S6384 show a composition bias toward basic and acidic residues. Spectrin repeat units follow at residues S6461–I6549, K6550–D6665, and F6666–E6782. Positions P6463–R6474 are enriched in basic and acidic residues. Residues P6477–P6489 are compositionally biased toward pro residues. The segment covering P6490–G6499 has biased composition (low complexity). The interval G6769–P6824 is disordered. One can recognise a KASH domain in the interval R6826–T6885. The helical; Anchor for type IV membrane protein transmembrane segment at A6835–S6855 threads the bilayer. Over S6856 to T6885 the chain is Perinuclear space. Positions F6872–T6885 are sufficient for interaction with SUN2.

Belongs to the nesprin family. As to quaternary structure, core component of LINC complexes which are composed of inner nuclear membrane SUN domain-containing proteins coupled to outer nuclear membrane KASH domain-containing nesprins. SUN and KASH domain-containing proteins seem to bind each other promiscuously; however, some LINC complex constituents are tissue- or cell type-specific. At least SUN1/2-containing core LINC complexes are proposed to be hexameric composed of three protomers of each KASH and SUN domain-containing protein. The SUN2:SYNE2/KASH2 complex is a heterohexamer; the homotrimeric cloverleave-like conformation of the SUN domain is a prerequisite for LINC complex formation in which three separate SYNE2/KASH2 peptides bind at the interface of adjacent SUN domains. Interacts with EMD, LMNA, MKS3 and F-actin via its N-terminal domain. Interacts with DCTN1 and DYNC1I1/2; suggesting the association with the dynein-dynactin motor complex. Associates with kinesin motor complexes. Interacts with TMEM67. Interacts (via KASH domain) with TMEM258. Interacts with BROX; this interaction promotes SYN2 ubiquitination and facilitates the relaxation of mechanical stress imposed by compressive actin fibers at the rupture site. The disulfid bond with SUN2 is required for stability of the SUN2:SYNE2/KASH2 LINC complex under tensile forces though not required for the interaction. Post-translationally, ubiquitinated, targeting it for degradation. Widely expressed, with higher level in kidney, adult and fetal liver, stomach and placenta. Weakly expressed in skeletal muscle and brain. Isoform 5 is highly expressed in pancreas, skeletal muscle and heart.

It localises to the nucleus outer membrane. The protein localises to the sarcoplasmic reticulum membrane. The protein resides in the cell membrane. Its subcellular location is the cytoplasm. It is found in the cytoskeleton. It localises to the mitochondrion. The protein localises to the nucleus. The protein resides in the nucleoplasm. Its subcellular location is the myofibril. It is found in the sarcomere. It localises to the z line. The protein localises to the cell junction. The protein resides in the focal adhesion. Its function is as follows. Multi-isomeric modular protein which forms a linking network between organelles and the actin cytoskeleton to maintain the subcellular spatial organization. As a component of the LINC (LInker of Nucleoskeleton and Cytoskeleton) complex involved in the connection between the nuclear lamina and the cytoskeleton. The nucleocytoplasmic interactions established by the LINC complex play an important role in the transmission of mechanical forces across the nuclear envelope and in nuclear movement and positioning. Specifically, SYNE2 and SUN2 assemble in arrays of transmembrane actin-associated nuclear (TAN) lines which are bound to F-actin cables and couple the nucleus to retrograde actin flow during actin-dependent nuclear movement. May be involved in nucleus-centrosome attachment. During interkinetic nuclear migration (INM) at G2 phase and nuclear migration in neural progenitors its LINC complex association with SUN1/2 and probable association with cytoplasmic dynein-dynactin motor complexes functions to pull the nucleus toward the centrosome; SYNE1 and SYNE2 may act redundantly. During INM at G1 phase mediates respective LINC complex association with kinesin to push the nucleus away from the centrosome. Involved in nuclear migration in retinal photoreceptor progenitors. Required for centrosome migration to the apical cell surface during early ciliogenesis. Facilitates the relaxation of mechanical stress imposed by compressive actin fibers at the rupture site through its nteraction with SYN2. The protein is Nesprin-2 of Homo sapiens (Human).